We begin with the raw amino-acid sequence, 392 residues long: Phospho-N-acetylmuramoyl-pentapeptide-transferase (392 aa).

Helical transmembrane passes span 28–48 (RALMAALTALVVGLVAGPYVI), 74–94 (TPTMGGVLVLFAIAFATLMWF), 100–120 (FVWIVLWVTLGFGAIGWVDDW), 137–157 (YFWQSVVGLIAGFYLLFSISE), 193–213 (VSYPLGGIGFVILTYLVIVGA), 225–245 (GLAIMPVVMVGSALGVFAYVT), 262–282 (SGELLVFCSAMAGAGLAFLWF), 289–309 (VFMGDVGALALGGALGTIAVI), 314–334 (IVFFIMGGIFVVEAISVMAQV), and 369–389 (QVVVRFWIITMLLCLIGLSTL).

This sequence belongs to the glycosyltransferase 4 family. MraY subfamily. Mg(2+) serves as cofactor.

It localises to the cell inner membrane. The enzyme catalyses UDP-N-acetyl-alpha-D-muramoyl-L-alanyl-gamma-D-glutamyl-meso-2,6-diaminopimeloyl-D-alanyl-D-alanine + di-trans,octa-cis-undecaprenyl phosphate = di-trans,octa-cis-undecaprenyl diphospho-N-acetyl-alpha-D-muramoyl-L-alanyl-D-glutamyl-meso-2,6-diaminopimeloyl-D-alanyl-D-alanine + UMP. It functions in the pathway cell wall biogenesis; peptidoglycan biosynthesis. In terms of biological role, catalyzes the initial step of the lipid cycle reactions in the biosynthesis of the cell wall peptidoglycan: transfers peptidoglycan precursor phospho-MurNAc-pentapeptide from UDP-MurNAc-pentapeptide onto the lipid carrier undecaprenyl phosphate, yielding undecaprenyl-pyrophosphoryl-MurNAc-pentapeptide, known as lipid I. In Variovorax paradoxus (strain S110), this protein is Phospho-N-acetylmuramoyl-pentapeptide-transferase.